A 583-amino-acid chain; its full sequence is MLO-like protein 6 (583 aa).

The Extracellular portion of the chain corresponds to 1 to 15 (MADQVKEKTLEETST). Residues 16–36 (WAVAVVCFVLLLISIVIEKLI) form a helical membrane-spanning segment. Residues 37 to 61 (HKIGSWFKKKNKKALYEALEKVKAE) are Cytoplasmic-facing. Residues 62–82 (LMLMGFISLLLTIGQGYISNI) traverse the membrane as a helical segment. The Extracellular segment spans residues 83–161 (CIPKNIAASM…VSAYGMHQLH (79 aa)). Residues 162–182 (IFIFVLAVCHVIYCIVTYALG) form a helical membrane-spanning segment. The Cytoplasmic segment spans residues 183-284 (KTKMRRWKKW…KYIQRSLEED (102 aa)). The chain crosses the membrane as a helical span at residues 285–305 (FKTIVEINPVIWFIAVLFLLT). Over 306 to 314 (NTNGLNSYL) the chain is Extracellular. Residues 315–335 (WLPFIPFIVILIVGTKLQVII) traverse the membrane as a helical segment. Residues 336–368 (TKLGLRIQEKGDVVKGTPLVQPGDHFFWFGRPR) lie on the Cytoplasmic side of the membrane. The helical transmembrane segment at 369 to 389 (FILFLIHLVLFTNAFQLAFFV) threads the bilayer. The Extracellular segment spans residues 390-411 (WSTYEFGLKNCFHESRVDVIIR). The helical transmembrane segment at 412 to 432 (ISIGLLVQILCSYVTLPLYAL) threads the bilayer. The Cytoplasmic portion of the chain corresponds to 433-583 (VTQMGSKMKP…ISLRDFSFKR (151 aa)). Residues 447-468 (ERVATALKSWHHTAKKNIKHGR) form a calmodulin-binding region. The segment at 461–583 (KKNIKHGRTS…ISLRDFSFKR (123 aa)) is disordered. Over residues 470-484 (SESTTPFSSRPTTPT) the composition is skewed to low complexity. The span at 541 to 551 (RFGEEESEKKF) shows a compositional bias: basic and acidic residues.

It belongs to the MLO family.

The protein resides in the membrane. Its function is as follows. May be involved in modulation of pathogen defense and leaf cell death. Activity seems to be regulated by Ca(2+)-dependent calmodulin binding and seems not to require heterotrimeric G proteins. The sequence is that of MLO-like protein 6 (MLO6) from Arabidopsis thaliana (Mouse-ear cress).